Consider the following 497-residue polypeptide: Signal recognition particle subunit SRP54 1 (497 aa).

Residues 1-295 form a G-domain region; sequence MVLAQLGGSI…DVKPFVSRLL (295 aa). GTP is bound by residues 108-115, 190-194, and 248-251; these read GLQGSGKT, DTSGR, and TKLD. The segment at 296 to 497 is M-domain; that stretch reads GMGDLSGLMD…MLGGMGLGGD (202 aa).

It belongs to the GTP-binding SRP family. SRP54 subfamily. Component of a signal recognition particle (SRP) complex that consists of a 7SL RNA molecule of 300 nucleotides and six protein subunits: SRP72, SRP68, SRP54, SRP19, SRP14 and SRP9.

It is found in the cytoplasm. The protein localises to the endoplasmic reticulum. The enzyme catalyses GTP + H2O = GDP + phosphate + H(+). In terms of biological role, component of the signal recognition particle (SRP) complex, a ribonucleoprotein complex that mediates the cotranslational targeting of secretory and membrane proteins to the endoplasmic reticulum (ER). As part of the SRP complex, associates with the SRP receptor (SR) component SRPRA to target secretory proteins to the endoplasmic reticulum membrane. Binds to the signal sequence of presecretory proteins when they emerge from the ribosomes. Displays basal GTPase activity, and stimulates reciprocal GTPase activation of the SR subunit SRPRA. Forms a guanosine 5'-triphosphate (GTP)-dependent complex with the SR subunit SRPRA. SR compaction and GTPase mediated rearrangement of SR drive SRP-mediated cotranslational protein translocation into the ER. Requires the presence of SRP9/SRP14 and/or SRP19 to stably interact with RNA. This is Signal recognition particle subunit SRP54 1 (SRP54-1) from Hordeum vulgare (Barley).